Consider the following 308-residue polypeptide: Ornithine carbamoyltransferase (308 aa).

Residues 50–53 (STRT), Q77, R101, and 128–131 (HPCQ) each bind carbamoyl phosphate. Residues N160, D224, and 228–229 (SM) each bind L-ornithine. Carbamoyl phosphate contacts are provided by residues 264–265 (CL) and R292.

This sequence belongs to the aspartate/ornithine carbamoyltransferase superfamily. OTCase family.

It localises to the cytoplasm. It catalyses the reaction carbamoyl phosphate + L-ornithine = L-citrulline + phosphate + H(+). Its pathway is amino-acid biosynthesis; L-arginine biosynthesis; L-arginine from L-ornithine and carbamoyl phosphate: step 1/3. Functionally, reversibly catalyzes the transfer of the carbamoyl group from carbamoyl phosphate (CP) to the N(epsilon) atom of ornithine (ORN) to produce L-citrulline. The protein is Ornithine carbamoyltransferase of Mycobacterium ulcerans (strain Agy99).